Reading from the N-terminus, the 429-residue chain is Ribosomal RNA small subunit methyltransferase B (429 aa).

Residues cysteine 254 to lysine 260, aspartate 277, aspartate 303, and aspartate 322 contribute to the S-adenosyl-L-methionine site. The Nucleophile role is filled by cysteine 375.

This sequence belongs to the class I-like SAM-binding methyltransferase superfamily. RsmB/NOP family.

Its subcellular location is the cytoplasm. The enzyme catalyses cytidine(967) in 16S rRNA + S-adenosyl-L-methionine = 5-methylcytidine(967) in 16S rRNA + S-adenosyl-L-homocysteine + H(+). Its function is as follows. Specifically methylates the cytosine at position 967 (m5C967) of 16S rRNA. The protein is Ribosomal RNA small subunit methyltransferase B of Pectobacterium carotovorum subsp. carotovorum (strain PC1).